The primary structure comprises 106 residues: Class II hydrophobin 6 (106 aa).

An N-terminal signal peptide occupies residues 1-16; the sequence is MQFFTVATLFLATAFA. 4 disulfides stabilise this stretch: cysteine 36–cysteine 86, cysteine 47–cysteine 77, cysteine 48–cysteine 60, and cysteine 87–cysteine 98.

It belongs to the cerato-ulmin hydrophobin family. In terms of assembly, homodimer. Homodimers further self-assemble to form highly ordered films at water-air interfaces through intermolecular interactions.

The protein resides in the secreted. It localises to the cell wall. Aerial growth, conidiation, and dispersal of filamentous fungi in the environment rely upon a capability of their secreting small amphipathic proteins called hydrophobins (HPBs) with low sequence identity. Class I can self-assemble into an outermost layer of rodlet bundles on aerial cell surfaces, conferring cellular hydrophobicity that supports fungal growth, development and dispersal; whereas Class II form highly ordered films at water-air interfaces through intermolecular interactions but contribute nothing to the rodlet structure. HFB2-6 is a class II hydrophobin that has a function in root colonization. Acts as an effector in poplar by up-regulating the expression of genes related to both the jasmonic acid and salicylic acid signal transduction pathways, which not only causes induced systemic resistance (ISR), but also systemic acquired resistance (SAR), giving poplar broad-spectrum resistance to pathogens. Also induces genes related to auxin signal transduction to promote poplar growth. Plays roles in interactions with both biotic and abiotic environmental conditions such as the presence of the pathogen Alternaria alternata or nutrient starvation conditions. This Trichoderma asperellum (strain ATCC 204424 / CBS 433.97 / NBRC 101777) protein is Class II hydrophobin 6.